Consider the following 477-residue polypeptide: Ribulose bisphosphate carboxylase large chain (477 aa).

Residues M1–S2 constitute a propeptide that is removed on maturation. P3 is modified (N-acetylproline). K14 carries the post-translational modification N6,N6,N6-trimethyllysine. Residues N123 and T173 each coordinate substrate. The active-site Proton acceptor is the K175. Substrate is bound at residue K177. 3 residues coordinate Mg(2+): K201, D203, and E204. K201 carries the post-translational modification N6-carboxylysine. H294 (proton acceptor) is an active-site residue. Substrate contacts are provided by R295, H327, and S379.

This sequence belongs to the RuBisCO large chain family. Type I subfamily. As to quaternary structure, heterohexadecamer of 8 large chains and 8 small chains; disulfide-linked. The disulfide link is formed within the large subunit homodimers. Mg(2+) is required as a cofactor. In terms of processing, the disulfide bond which can form in the large chain dimeric partners within the hexadecamer appears to be associated with oxidative stress and protein turnover.

It is found in the plastid. The protein resides in the chloroplast. The enzyme catalyses 2 (2R)-3-phosphoglycerate + 2 H(+) = D-ribulose 1,5-bisphosphate + CO2 + H2O. The catalysed reaction is D-ribulose 1,5-bisphosphate + O2 = 2-phosphoglycolate + (2R)-3-phosphoglycerate + 2 H(+). Its function is as follows. RuBisCO catalyzes two reactions: the carboxylation of D-ribulose 1,5-bisphosphate, the primary event in carbon dioxide fixation, as well as the oxidative fragmentation of the pentose substrate in the photorespiration process. Both reactions occur simultaneously and in competition at the same active site. This chain is Ribulose bisphosphate carboxylase large chain, found in Carthamus tinctorius (Safflower).